The sequence spans 476 residues: Proton-coupled amino acid transporter 1 (476 aa).

The span at 1–15 (MSTQRLRNEDYHDYS) shows a compositional bias: basic and acidic residues. The segment at 1-32 (MSTQRLRNEDYHDYSSTDVSPEESPSEGLNNL) is disordered. Residues 1–51 (MSTQRLRNEDYHDYSSTDVSPEESPSEGLNNLSSPGSYQRFGQSNSTTWFQ) are Cytoplasmic-facing. Residues 52–72 (TLIHLLKGNIGTGLLGLPLAV) form a helical membrane-spanning segment. At 73–78 (KNAGIV) the chain is on the extracellular side. The chain crosses the membrane as a helical span at residues 79 to 99 (MGPISLLIIGIVAVHCMGILV). The Cytoplasmic segment spans residues 100–141 (KCAHHFCRRLNKSFVDYGDTVMYGLESSPCSWLRNHAHWGRR). Residues 142 to 162 (VVDFFLIVTQLGFCCVYFVFL) form a helical membrane-spanning segment. Over 163–190 (ADNFKQVIEAANGTTNNCHNNETVILTP) the chain is Extracellular. Residues Asn-174 and Asn-183 are each glycosylated (N-linked (GlcNAc...) asparagine). Residues Cys-180 and Cys-329 are joined by a disulfide bond. A helical membrane pass occupies residues 191 to 211 (TMDSRLYMLSFLPFLVLLVFI). At 212 to 215 (RNLR) the chain is on the cytoplasmic side. Residues 216 to 236 (ALSIFSLLANITMLVSLVMIY) traverse the membrane as a helical segment. Residues 237–257 (QFIVQRIPDPSHLPLVAPWKT) lie on the Extracellular side of the membrane. The chain crosses the membrane as a helical span at residues 258 to 278 (YPLFFGTAIFSFEGIGMVLPL). The Cytoplasmic segment spans residues 279–289 (ENKMKDPRKFP). The chain crosses the membrane as a helical span at residues 290 to 310 (LILYLGMVIVTILYISLGCLG). Residues 311-342 (YLQFGANIQGSITLNLPNCWLYQSVKLLYSIG) lie on the Extracellular side of the membrane. The helical transmembrane segment at 343–363 (IFFTYALQFYVPAEIIIPFFV) threads the bilayer. Over 364-372 (SRAPEHCEL) the chain is Cytoplasmic. A helical transmembrane segment spans residues 373–393 (VVDLFVRTVLVCLTCILAILI). Over 394 to 397 (PRLD) the chain is Extracellular. Residues 398–418 (LVISLVGSVSSSALALIIPPL) traverse the membrane as a helical segment. Residues 419 to 439 (LEVTTFYSEGMSPLTIFKDAL) are Cytoplasmic-facing. Residues 440 to 460 (ISILGFVGFVVGTYEALYELI) form a helical membrane-spanning segment. Topologically, residues 461 to 476 (QPSNAPIFINSTCAFI) are extracellular. Residue Asn-470 is glycosylated (N-linked (GlcNAc...) asparagine).

It belongs to the amino acid/polyamine transporter 2 family.

It is found in the cell membrane. The protein localises to the apical cell membrane. The protein resides in the lysosome membrane. It catalyses the reaction glycine(in) + H(+)(in) = glycine(out) + H(+)(out). The enzyme catalyses L-alanine(in) + H(+)(in) = L-alanine(out) + H(+)(out). It carries out the reaction D-alanine(in) + H(+)(in) = D-alanine(out) + H(+)(out). The catalysed reaction is L-proline(out) + H(+)(out) = L-proline(in) + H(+)(in). It catalyses the reaction D-proline(out) + H(+)(out) = D-proline(in) + H(+)(in). The enzyme catalyses D-serine(out) + H(+)(out) = D-serine(in) + H(+)(in). It carries out the reaction L-serine(in) + H(+)(in) = L-serine(out) + H(+)(out). The catalysed reaction is 4-aminobutanoate(in) + H(+)(in) = 4-aminobutanoate(out) + H(+)(out). It catalyses the reaction beta-alanine(in) + H(+)(in) = beta-alanine(out) + H(+)(out). Electrogenic proton/amino acid symporter with selectivity for small apolar L-amino acids, their D-enantiomers and selected amino acid derivatives such as 4-aminobutanoate/GABA. May be involved in the efflux from the lysosomal compartment of neutral amino acids resulting from proteolysis. May play a role in specifying sites for exocytosis in neurons. The sequence is that of Proton-coupled amino acid transporter 1 from Homo sapiens (Human).